The chain runs to 808 residues: Probable inorganic carbon transporter subunit DabA (808 aa).

Cysteine 335, aspartate 337, histidine 497, and cysteine 512 together coordinate Zn(2+).

Belongs to the inorganic carbon transporter (TC 9.A.2) DabA family. As to quaternary structure, forms a complex with DabB. Zn(2+) is required as a cofactor.

Its subcellular location is the cell inner membrane. Functionally, part of an energy-coupled inorganic carbon pump. This chain is Probable inorganic carbon transporter subunit DabA, found in Rhodopseudomonas palustris (strain TIE-1).